We begin with the raw amino-acid sequence, 123 residues long: Cholecystokinin A (123 aa).

The first 20 residues, 1-20 (MYSGICICLLLAMLSASSKA), serve as a signal peptide directing secretion. A propeptide spanning residues 21-103 (HQSEDAVVTE…FDQPHRINDR (83 aa)) is cleaved from the precursor. Tyr-105 bears the Sulfotyrosine mark. Phe-111 carries the post-translational modification Phenylalanine amide. Residues 115–123 (SAEEYEYSS) constitute a propeptide that is removed on maturation.

This sequence belongs to the gastrin/cholecystokinin family. In terms of processing, the precursor is cleaved by proteases to produce a number of active cholecystokinins. Brain, gastrointestinal tract and lung.

Its subcellular location is the secreted. This Xenopus laevis (African clawed frog) protein is Cholecystokinin A (cck-a).